We begin with the raw amino-acid sequence, 515 residues long: E3 ubiquitin-protein ligase RNF217 (515 aa).

2 disordered regions span residues 1–125 (MGEE…VLAQ) and 147–189 (PEAP…ADPL). Over residues 10–22 (GSGGARASGGGSA) the composition is skewed to gly residues. Composition is skewed to low complexity over residues 39-49 (GPRAAASSSRP) and 147-157 (PEAPSAESPSP). The segment covering 158–178 (SESPPQAPLGPIPASPPPSFP) has biased composition (pro residues). Low complexity predominate over residues 179–189 (SSPLSLPADPL). The segment at 232–451 (MVLMCRVCLE…LSIFGCKYRY (220 aa)) is TRIAD supradomain. 10 residues coordinate Zn(2+): cysteine 236, cysteine 239, cysteine 256, cysteine 259, cysteine 356, cysteine 359, histidine 364, cysteine 369, cysteine 396, and cysteine 399. The RING-type 1 zinc-finger motif lies at 236-282 (CRVCLEDKPIKPLPCCKKAVCEECLKIYLSSQVQLGQVEIKCPVTEC). The segment at 301–369 (IKYKYFLELG…HSPWHEGVNC (69 aa)) adopts an IBR-type zinc-finger fold. The RING-type 2; atypical zinc-finger motif lies at 396-425 (CPKCKIHIQRTEGCDHMTCSQCNTNFCYRC). Cysteine 409 is an active-site residue. Zn(2+) is bound by residues cysteine 414, cysteine 417, cysteine 422, cysteine 425, histidine 438, and cysteine 447. The chain crosses the membrane as a helical span at residues 476–496 (LILVLGLALGAIAVVIGLFVF).

Belongs to the RBR family. RNF217 subfamily. In terms of assembly, interacts with HAX1.

The protein resides in the membrane. It is found in the cytoplasm. The catalysed reaction is [E2 ubiquitin-conjugating enzyme]-S-ubiquitinyl-L-cysteine + [acceptor protein]-L-lysine = [E2 ubiquitin-conjugating enzyme]-L-cysteine + [acceptor protein]-N(6)-ubiquitinyl-L-lysine.. It functions in the pathway protein modification; protein ubiquitination. Its function is as follows. E3 ubiquitin-protein ligase which accepts ubiquitin from E2 ubiquitin-conjugating enzymes in the form of a thioester and then directly transfers the ubiquitin to targeted substrates. Mediates the degradation of the iron exporter ferroportin/SLC40A1 and thus regulates iron homeostasis. This is E3 ubiquitin-protein ligase RNF217 (Rnf217) from Mus musculus (Mouse).